A 358-amino-acid chain; its full sequence is Molybdenum import ATP-binding protein ModC 2 (358 aa).

Positions 1-234 (MPEQGIEAQL…PRLPLNHPDE (234 aa)) constitute an ABC transporter domain. Position 35–42 (35–42 (GRSGSGKT)) interacts with ATP. The Mop domain occupies 293–358 (NSSILNILRV…AQIKSVALME (66 aa)).

The protein belongs to the ABC transporter superfamily. Molybdate importer (TC 3.A.1.8) family. In terms of assembly, the complex is composed of two ATP-binding proteins (ModC), two transmembrane proteins (ModB) and a solute-binding protein (ModA).

It is found in the cell inner membrane. It carries out the reaction molybdate(out) + ATP + H2O = molybdate(in) + ADP + phosphate + H(+). Part of the ABC transporter complex ModABC involved in molybdenum import. Responsible for energy coupling to the transport system. In Azotobacter vinelandii, this protein is Molybdenum import ATP-binding protein ModC 2.